A 574-amino-acid polypeptide reads, in one-letter code: Ankyrin repeat protein B18 (574 aa).

ANK repeat units lie at residues 56–87, 135–164, 167–213, 217–249, 253–285, and 327–356; these read TGYT…NVTM, IKSR…DPNF, DGYT…NLNA, CGNT…NFKI, HGLT…NVGE, and EGKT…DINA. The region spanning 541–574 is the F-box domain; it reads NCLLTLLPSEIIYEILYMLTINDLYNISYPPTKV.

The sequence is that of Ankyrin repeat protein B18 from Homo sapiens (Human).